A 400-amino-acid chain; its full sequence is Chalcone synthase 7 (400 aa).

The active site involves Cys168.

Belongs to the thiolase-like superfamily. Chalcone/stilbene synthases family.

The catalysed reaction is (E)-4-coumaroyl-CoA + 3 malonyl-CoA + 3 H(+) = 2',4,4',6'-tetrahydroxychalcone + 3 CO2 + 4 CoA. It participates in secondary metabolite biosynthesis; flavonoid biosynthesis. Its function is as follows. The primary product of this enzyme is 4,2',4',6'-tetrahydroxychalcone (also termed naringenin-chalcone or chalcone) which can under specific conditions spontaneously isomerize into naringenin. In Sorghum bicolor (Sorghum), this protein is Chalcone synthase 7 (CHS7).